The primary structure comprises 104 residues: N(4)-acetylcytidine amidohydrolase (104 aa).

Residues 6 to 102 (ITFYQRFEAD…SEFWVIEIRL (97 aa)) form the ASCH domain. Residue Lys21 is the Proton acceptor of the active site. Thr24 serves as the catalytic Nucleophile. The active-site Proton donor is the Glu74.

The protein belongs to the N(4)-acetylcytidine amidohydrolase family.

The catalysed reaction is N(4)-acetylcytidine + H2O = cytidine + acetate + H(+). The enzyme catalyses N(4)-acetyl-2'-deoxycytidine + H2O = 2'-deoxycytidine + acetate + H(+). It catalyses the reaction N(4)-acetylcytosine + H2O = cytosine + acetate + H(+). Functionally, catalyzes the hydrolysis of N(4)-acetylcytidine (ac4C). The polypeptide is N(4)-acetylcytidine amidohydrolase (Haemophilus influenzae (strain PittEE)).